Here is a 152-residue protein sequence, read N- to C-terminus: UPF0225 protein YchJ (152 aa).

The protein belongs to the UPF0225 family.

The sequence is that of UPF0225 protein YchJ from Shigella flexneri serotype 5b (strain 8401).